Here is an 86-residue protein sequence, read N- to C-terminus: MeuNaTxbeta-1 (86 aa).

An N-terminal signal peptide occupies residues 1–20 (MMKIIIFLIVSSLVLIGVKT). Residues 21–83 (DNGYLLDKYT…LWHYETNKCN (63 aa)) enclose the LCN-type CS-alpha/beta domain. 4 disulfide bridges follow: C32–C82, C36–C57, C43–C64, and C47–C66.

Expressed by the venom gland.

The protein localises to the secreted. Its function is as follows. Inhibits sodium channels (Nav). Also moderately inhibits human calcium-activated potassium channel KCa1.1/KCNMA1/BK (41.9% decrease at 2 uM toxin concentration). Shows moderate antimicrobial activity against both Gram-positive and -negative bacteria. The polypeptide is MeuNaTxbeta-1 (Mesobuthus eupeus (Lesser Asian scorpion)).